The chain runs to 1043 residues: Phosphatidylinositol 4,5-bisphosphate 3-kinase catalytic subunit delta isoform (1043 aa).

The PI3K-ABD domain maps to 16 to 105; it reads ESQSVVVDFL…LPVLRLVARE (90 aa). One can recognise a PI3K-RBD domain in the interval 187–278; the sequence is NRALLVNVKF…GLTPHLTMVH (92 aa). Residues 287–312 are disordered; the sequence is DEQSNPAPQVQKPRAKPPPIPAKKPS. Residues 319 to 476 form the C2 PI3K-type domain; that stretch reads LEQPFSIELI…SAAALVIYLP (158 aa). One can recognise a PIK helical domain in the interval 496-673; it reads RHGERGRITE…GLIMEAYCRG (178 aa). The residue at position 523 (Tyr523) is a Phosphotyrosine. Residues 744-1026 enclose the PI3K/PI4K catalytic domain; it reads CVEQCTFMDS…KFNEALRESW (283 aa). Positions 750–756 are G-loop; it reads FMDSKMK. The interval 889–897 is catalytic loop; the sequence is GIGDRHSDN. Residues 908-934 are activation loop; it reads HIDFGHFLGNFKTKFGINRERVPFILT. Phosphoserine; by autocatalysis is present on Ser1038.

It belongs to the PI3/PI4-kinase family. As to quaternary structure, heterodimer of a catalytic subunit PIK3CD and a p85 regulatory subunit (PIK3R1, PIK3R2 or PIK3R3). Interacts with ERAS and HRAS. Autophosphorylation on Ser-1038 results in the almost complete inactivation of the lipid kinase activity. As to expression, abundantly expressed in adult mouse spleen as well as in testis. Isoform 1 is expressed in spleen and lung (at protein level). Isoform 1 is expressed predominantly in leukocytes.

The protein resides in the cytoplasm. The catalysed reaction is a 1,2-diacyl-sn-glycero-3-phospho-(1D-myo-inositol-4,5-bisphosphate) + ATP = a 1,2-diacyl-sn-glycero-3-phospho-(1D-myo-inositol-3,4,5-trisphosphate) + ADP + H(+). It catalyses the reaction a 1,2-diacyl-sn-glycero-3-phospho-(1D-myo-inositol) + ATP = a 1,2-diacyl-sn-glycero-3-phospho-(1D-myo-inositol-3-phosphate) + ADP + H(+). The enzyme catalyses 1-octadecanoyl-2-(5Z,8Z,11Z,14Z)-eicosatetraenoyl-sn-glycero-3-phospho-1D-myo-inositol 4,5-bisphosphate + ATP = 1-octadecanoyl-2-(5Z,8Z,11Z,14Z-eicosatetraenoyl)-sn-glycero-3-phospho-(1D-myo-inositol 3,4,5-triphosphate) + ADP + H(+). The protein operates within phospholipid metabolism; phosphatidylinositol phosphate biosynthesis. Activated by growth factors and cytokine receptors through a tyrosine-kinase-dependent mechanism. Activated by RAS. IC87114 inhibits lipid kinase activity and is selective in cells at doses up to 5-10 uM. Among other effects, IC87114 reduces allergic responses, prevents the recruitment of antigen-specific T cells into target tissue, and affects natural killer cell chemotaxis. Its function is as follows. Phosphoinositide-3-kinase (PI3K) phosphorylates phosphatidylinositol (PI) and its phosphorylated derivatives at position 3 of the inositol ring to produce 3-phosphoinositides. Uses ATP and PtdIns(4,5)P2 (phosphatidylinositol 4,5-bisphosphate) to generate phosphatidylinositol 3,4,5-trisphosphate (PIP3). PIP3 plays a key role by recruiting PH domain-containing proteins to the membrane, including AKT1 and PDPK1, activating signaling cascades involved in cell growth, survival, proliferation, motility and morphology. Mediates immune responses. Plays a role in B-cell development, proliferation, migration, and function. Required for B-cell receptor (BCR) signaling. Mediates B-cell proliferation response to anti-IgM, anti-CD40 and IL4 stimulation. Promotes cytokine production in response to TLR4 and TLR9. Required for antibody class switch mediated by TLR9. Involved in the antigen presentation function of B-cells. Involved in B-cell chemotaxis in response to CXCL13 and sphingosine 1-phosphate (S1P). Required for proliferation, signaling and cytokine production of naive, effector and memory T-cells. Required for T-cell receptor (TCR) signaling. Mediates TCR signaling events at the immune synapse. Activation by TCR leads to antigen-dependent memory T-cell migration and retention to antigenic tissues. Together with PIK3CG participates in T-cell development. Contributes to T-helper cell expansion and differentiation. Required for T-cell migration mediated by homing receptors SELL/CD62L, CCR7 and S1PR1 and antigen dependent recruitment of T-cells. Together with PIK3CG is involved in natural killer (NK) cell development and migration towards the sites of inflammation. Participates in NK cell receptor activation. Plays a role in NK cell maturation and cytokine production. Together with PIK3CG is involved in neutrophil chemotaxis and extravasation. Together with PIK3CG participates in neutrophil respiratory burst. Plays important roles in mast-cell development and mast cell mediated allergic response. Involved in stem cell factor (SCF)-mediated proliferation, adhesion and migration. Required for allergen-IgE-induced degranulation and cytokine release. The lipid kinase activity is required for its biological function. The sequence is that of Phosphatidylinositol 4,5-bisphosphate 3-kinase catalytic subunit delta isoform (Pik3cd) from Mus musculus (Mouse).